The following is a 178-amino-acid chain: UPF0114 protein in repA1-repA2 intergenic region (178 aa).

Transmembrane regions (helical) follow at residues 14-34 (WLIF…TLKF), 53-73 (LILV…LVMV), and 136-156 (WYVI…YIDR).

The protein belongs to the UPF0114 family.

It localises to the cell membrane. The polypeptide is UPF0114 protein in repA1-repA2 intergenic region (Buchnera aphidicola subsp. Tetraneura caerulescens).